The following is a 119-amino-acid chain: Large ribosomal subunit protein uL14m (119 aa).

This sequence belongs to the universal ribosomal protein uL14 family.

Its subcellular location is the mitochondrion. The protein is Large ribosomal subunit protein uL14m of Tetrahymena pyriformis.